The following is a 298-amino-acid chain: Enoyl-CoA hydratase AFT6-1 (298 aa).

Positions 1-39 are disordered; sequence MTYSTTKSVAMNPDEDAPPSDINSSGRLMSHSEVEPRGN.

It belongs to the enoyl-CoA hydratase/isomerase family.

It carries out the reaction a (3S)-3-hydroxyacyl-CoA = a (2E)-enoyl-CoA + H2O. The catalysed reaction is a 4-saturated-(3S)-3-hydroxyacyl-CoA = a (3E)-enoyl-CoA + H2O. It participates in mycotoxin biosynthesis. Its function is as follows. Enoyl-CoA hydratase; part of the gene clusters that mediate the biosynthesis of the host-selective toxins (HSTs) AF-toxins responsible for Alternaria black spot of strawberry disease by the strawberry pathotype. AF-toxin I and III are valine derivatives of 2,3-dyhydroxy-isovaleric acid and 2-hydroxy-isovaleric acid respectively, while AF II is an isoleucine derivative of 2-hydroxy-valeric acid. These derivatives are bound to a 9,10-epoxy-8-hydroxy-9-methyl-decatrienoic acid (EDA) moiety. On cellular level, AF-toxin affects plasma membrane of susceptible cells and cause a sudden increase in loss of K(+) after a few minutes of toxin treatment. The aldo-keto reductase AFTS1 catalyzes the conversion of 2-keto-isovaleric acid (2-KIV) to 2-hydroxy-isovaleric acid (2-HIV) by reduction of its ketone to an alcohol. The acyl-CoA ligase AFT1, the hydrolase AFT2 and the enoyl-CoA hydratases AFT3 and AFT6, but also the polyketide synthase AFT9, the acyl-CoA dehydrogenase AFT10, the cytochrome P450 monooxygenase AFT11 and the oxidoreductase AFT12 are all involved in the biosynthesis of the AK-, AF- and ACT-toxin common EDA structural moiety. The exact function of each enzyme, and of additional enzymes identified within the AF-toxin clusters have still to be determined. This chain is Enoyl-CoA hydratase AFT6-1, found in Alternaria alternata (Alternaria rot fungus).